A 424-amino-acid chain; its full sequence is Adenylosuccinate synthetase (424 aa).

Residues 12–18 (GDEGKGK) and 40–42 (GHT) contribute to the GTP site. The active-site Proton acceptor is Asp-13. Residues Asp-13 and Gly-40 each coordinate Mg(2+). IMP contacts are provided by residues 13-16 (DEGK), 38-41 (NAGH), Thr-130, Arg-144, Asn-220, Thr-235, and Arg-299. The active-site Proton donor is the His-41. Residue 295–301 (VTTGRRR) participates in substrate binding. Residues Arg-301, 327–329 (KLD), and 412–414 (GTG) contribute to the GTP site.

Belongs to the adenylosuccinate synthetase family. In terms of assembly, homodimer. It depends on Mg(2+) as a cofactor.

Its subcellular location is the cytoplasm. It carries out the reaction IMP + L-aspartate + GTP = N(6)-(1,2-dicarboxyethyl)-AMP + GDP + phosphate + 2 H(+). The protein operates within purine metabolism; AMP biosynthesis via de novo pathway; AMP from IMP: step 1/2. Functionally, plays an important role in the de novo pathway and in the salvage pathway of purine nucleotide biosynthesis. Catalyzes the first committed step in the biosynthesis of AMP from IMP. This is Adenylosuccinate synthetase from Aspergillus clavatus (strain ATCC 1007 / CBS 513.65 / DSM 816 / NCTC 3887 / NRRL 1 / QM 1276 / 107).